The chain runs to 230 residues: Uracil-DNA glycosylase (230 aa).

Residue aspartate 70 is the Proton acceptor of the active site.

This sequence belongs to the uracil-DNA glycosylase (UDG) superfamily. UNG family.

The protein localises to the cytoplasm. The catalysed reaction is Hydrolyzes single-stranded DNA or mismatched double-stranded DNA and polynucleotides, releasing free uracil.. In terms of biological role, excises uracil residues from the DNA which can arise as a result of misincorporation of dUMP residues by DNA polymerase or due to deamination of cytosine. In Pseudomonas putida (strain GB-1), this protein is Uracil-DNA glycosylase.